Consider the following 406-residue polypeptide: 3-oxoacyl-[acyl-carrier-protein] synthase 1 (406 aa).

One can recognise a Ketosynthase family 3 (KS3) domain in the interval 1-403 (MRRTVITGFG…GTNATLIFKR (403 aa)). Catalysis depends on for beta-ketoacyl synthase activity residues Cys-162, His-297, and His-332.

This sequence belongs to the thiolase-like superfamily. Beta-ketoacyl-ACP synthases family. Homodimer.

It is found in the cytoplasm. The enzyme catalyses a fatty acyl-[ACP] + malonyl-[ACP] + H(+) = a 3-oxoacyl-[ACP] + holo-[ACP] + CO2. It carries out the reaction (3Z)-decenoyl-[ACP] + malonyl-[ACP] + H(+) = 3-oxo-(5Z)-dodecenoyl-[ACP] + holo-[ACP] + CO2. The protein operates within lipid metabolism; fatty acid biosynthesis. In terms of biological role, involved in the type II fatty acid elongation cycle. Catalyzes the elongation of a wide range of acyl-ACP by the addition of two carbons from malonyl-ACP to an acyl acceptor. Can also use unsaturated fatty acids. Catalyzes a key reaction in unsaturated fatty acid (UFA) synthesis, the elongation of the cis-3-decenoyl-ACP produced by FabA. The protein is 3-oxoacyl-[acyl-carrier-protein] synthase 1 (fabB) of Haemophilus influenzae (strain ATCC 51907 / DSM 11121 / KW20 / Rd).